The primary structure comprises 302 residues: Sulfate adenylyltransferase subunit 2 (302 aa).

Belongs to the PAPS reductase family. CysD subfamily. As to quaternary structure, heterodimer composed of CysD, the smaller subunit, and CysN.

It catalyses the reaction sulfate + ATP + H(+) = adenosine 5'-phosphosulfate + diphosphate. Its pathway is sulfur metabolism; hydrogen sulfide biosynthesis; sulfite from sulfate: step 1/3. With CysN forms the ATP sulfurylase (ATPS) that catalyzes the adenylation of sulfate producing adenosine 5'-phosphosulfate (APS) and diphosphate, the first enzymatic step in sulfur assimilation pathway. APS synthesis involves the formation of a high-energy phosphoric-sulfuric acid anhydride bond driven by GTP hydrolysis by CysN coupled to ATP hydrolysis by CysD. The protein is Sulfate adenylyltransferase subunit 2 of Shewanella pealeana (strain ATCC 700345 / ANG-SQ1).